The following is a 525-amino-acid chain: Bifunctional purine biosynthesis protein PurH (525 aa).

Positions 1–148 (MPSNNLIKNA…KNYKNVIVIV (148 aa)) constitute an MGS-like domain.

It belongs to the PurH family.

It catalyses the reaction (6R)-10-formyltetrahydrofolate + 5-amino-1-(5-phospho-beta-D-ribosyl)imidazole-4-carboxamide = 5-formamido-1-(5-phospho-D-ribosyl)imidazole-4-carboxamide + (6S)-5,6,7,8-tetrahydrofolate. The catalysed reaction is IMP + H2O = 5-formamido-1-(5-phospho-D-ribosyl)imidazole-4-carboxamide. It participates in purine metabolism; IMP biosynthesis via de novo pathway; 5-formamido-1-(5-phospho-D-ribosyl)imidazole-4-carboxamide from 5-amino-1-(5-phospho-D-ribosyl)imidazole-4-carboxamide (10-formyl THF route): step 1/1. The protein operates within purine metabolism; IMP biosynthesis via de novo pathway; IMP from 5-formamido-1-(5-phospho-D-ribosyl)imidazole-4-carboxamide: step 1/1. This is Bifunctional purine biosynthesis protein PurH from Buchnera aphidicola subsp. Acyrthosiphon pisum (strain 5A).